A 248-amino-acid polypeptide reads, in one-letter code: tRNA1(Val) (adenine(37)-N6)-methyltransferase (248 aa).

Belongs to the methyltransferase superfamily. tRNA (adenine-N(6)-)-methyltransferase family.

The protein localises to the cytoplasm. The enzyme catalyses adenosine(37) in tRNA1(Val) + S-adenosyl-L-methionine = N(6)-methyladenosine(37) in tRNA1(Val) + S-adenosyl-L-homocysteine + H(+). Its function is as follows. Specifically methylates the adenine in position 37 of tRNA(1)(Val) (anticodon cmo5UAC). The protein is tRNA1(Val) (adenine(37)-N6)-methyltransferase of Pectobacterium carotovorum subsp. carotovorum (strain PC1).